Reading from the N-terminus, the 207-residue chain is Probable nicotinate-nucleotide adenylyltransferase (207 aa).

This sequence belongs to the NadD family.

It catalyses the reaction nicotinate beta-D-ribonucleotide + ATP + H(+) = deamido-NAD(+) + diphosphate. The protein operates within cofactor biosynthesis; NAD(+) biosynthesis; deamido-NAD(+) from nicotinate D-ribonucleotide: step 1/1. In terms of biological role, catalyzes the reversible adenylation of nicotinate mononucleotide (NaMN) to nicotinic acid adenine dinucleotide (NaAD). This chain is Probable nicotinate-nucleotide adenylyltransferase, found in Desulfitobacterium hafniense (strain DSM 10664 / DCB-2).